A 147-amino-acid polypeptide reads, in one-letter code: Hemoglobin subunit gamma-1 (147 aa).

N-acetylglycine is present on G2. In terms of domain architecture, Globin spans 3–147; the sequence is HFTEEDKATI…VASALSSRYH (145 aa). Phosphothreonine is present on T13. 3 positions are modified to phosphoserine: S45, S51, and S53. K60 is subject to N6-acetyllysine. H64 contacts heme b. The residue at position 83 (K83) is an N6-acetyllysine. H93 is a binding site for heme b. An S-nitrosocysteine modification is found at C94. Position 140 is a phosphoserine (S140).

Belongs to the globin family. As to quaternary structure, heterotetramer of two alpha chains and two gamma chains in fetal hemoglobin (Hb F). The ratio of gamma-G to gamma-A chains in is approximately 2:1 in infant chimpanzee, and 1:2 in the adult. Red blood cells.

Gamma chains make up the fetal hemoglobin F, in combination with alpha chains. The chain is Hemoglobin subunit gamma-1 (HBG1) from Pan troglodytes (Chimpanzee).